Consider the following 512-residue polypeptide: ETS translocation variant 3 (512 aa).

Positions 35-116 (IQLWHFILEL…KGKRFTYKFN (82 aa)) form a DNA-binding region, ETS. Residues 138–196 (QSAPPVPTASSRFHFPPLDTHSPTSDVQPGRFSASSLTASGQESSNGTDRKAELSXLED) are disordered. 3 positions are modified to phosphoserine: Ser139, Ser159, and Ser315. A compositionally biased stretch (polar residues) spans 158–184 (HSPTSDVQPGRFSASSLTASGQESSNG). Residues 341-512 (QFSIKLQPPP…QGLATAAADA (172 aa)) form a disordered region. The segment covering 380–406 (IKVEPASEKDAESLRQSAREKEEHTXE) has biased composition (basic and acidic residues). Lys381 participates in a covalent cross-link: Glycyl lysine isopeptide (Lys-Gly) (interchain with G-Cter in SUMO2). Lys388 bears the N6-acetyllysine; alternate mark. A Glycyl lysine isopeptide (Lys-Gly) (interchain with G-Cter in SUMO2); alternate cross-link involves residue Lys388. Residues 443-452 (EPLEVTEDIE) are compositionally biased toward acidic residues. Composition is skewed to basic and acidic residues over residues 453-468 (DRPGKEPSAPEKKEDA) and 479-491 (RWNDDPEARELSK).

It belongs to the ETS family.

It is found in the nucleus. Its function is as follows. Transcriptional repressor that contribute to growth arrest during terminal macrophage differentiation by repressing target genes involved in Ras-dependent proliferation. Represses MMP1 promoter activity. The polypeptide is ETS translocation variant 3 (ETV3) (Ateles geoffroyi (Black-handed spider monkey)).